Here is a 69-residue protein sequence, read N- to C-terminus: Putative membrane protein insertion efficiency factor (69 aa).

Belongs to the UPF0161 family.

The protein resides in the cell inner membrane. In terms of biological role, could be involved in insertion of integral membrane proteins into the membrane. The protein is Putative membrane protein insertion efficiency factor of Laribacter hongkongensis (strain HLHK9).